The chain runs to 339 residues: tRNA N6-adenosine threonylcarbamoyltransferase (339 aa).

2 residues coordinate Fe cation: H111 and H115. Residues 139–143 (LVSGG), D172, G185, D189, and N280 each bind substrate. Position 308 (D308) interacts with Fe cation.

It belongs to the KAE1 / TsaD family. Requires Fe(2+) as cofactor.

Its subcellular location is the cytoplasm. It carries out the reaction L-threonylcarbamoyladenylate + adenosine(37) in tRNA = N(6)-L-threonylcarbamoyladenosine(37) in tRNA + AMP + H(+). Functionally, required for the formation of a threonylcarbamoyl group on adenosine at position 37 (t(6)A37) in tRNAs that read codons beginning with adenine. Is involved in the transfer of the threonylcarbamoyl moiety of threonylcarbamoyl-AMP (TC-AMP) to the N6 group of A37, together with TsaE and TsaB. TsaD likely plays a direct catalytic role in this reaction. In Bacteroides fragilis (strain ATCC 25285 / DSM 2151 / CCUG 4856 / JCM 11019 / LMG 10263 / NCTC 9343 / Onslow / VPI 2553 / EN-2), this protein is tRNA N6-adenosine threonylcarbamoyltransferase.